Consider the following 287-residue polypeptide: ATP synthase gamma chain (287 aa).

Belongs to the ATPase gamma chain family. As to quaternary structure, F-type ATPases have 2 components, CF(1) - the catalytic core - and CF(0) - the membrane proton channel. CF(1) has five subunits: alpha(3), beta(3), gamma(1), delta(1), epsilon(1). CF(0) has three main subunits: a, b and c.

It localises to the cell inner membrane. Its function is as follows. Produces ATP from ADP in the presence of a proton gradient across the membrane. The gamma chain is believed to be important in regulating ATPase activity and the flow of protons through the CF(0) complex. The chain is ATP synthase gamma chain from Geotalea uraniireducens (strain Rf4) (Geobacter uraniireducens).